We begin with the raw amino-acid sequence, 445 residues long: Chromosome partition protein MukF (445 aa).

The leucine-zipper stretch occupies residues 213–241 (LSETSATLRELQDTLQAAGDELQTQILDI).

Belongs to the MukF family. As to quaternary structure, interacts, and probably forms a ternary complex, with MukE and MukB via its C-terminal region. The complex formation is stimulated by calcium or magnesium. It is required for an interaction between MukE and MukB.

The protein resides in the cytoplasm. It localises to the nucleoid. Functionally, involved in chromosome condensation, segregation and cell cycle progression. May participate in facilitating chromosome segregation by condensation DNA from both sides of a centrally located replisome during cell division. Not required for mini-F plasmid partitioning. Probably acts via its interaction with MukB and MukE. Overexpression results in anucleate cells. It has a calcium binding activity. This Vibrio cholerae serotype O1 (strain ATCC 39315 / El Tor Inaba N16961) protein is Chromosome partition protein MukF.